The following is a 1007-amino-acid chain: Aldehyde reductase lnbA (1007 aa).

Positions 35-428 (QVRQSPSSIA…GRVDHQIKVR (394 aa)) are adenylation (A) domain. Positions 540–617 (TLCQDTQTVL…ALASIIDHAK (78 aa)) constitute a Carrier domain. The residue at position 577 (Ser-577) is an O-(pantetheine 4'-phosphoryl)serine. Residues 659 to 998 (IFITGATGFV…PTLDCSLLKK (340 aa)) are short-chain dehydrogenase/reductase (R) domain.

Belongs to the NRP synthetase family.

It catalyses the reaction L-tyrosinal + AMP + diphosphate + NADP(+) = L-tyrosine + ATP + NADPH + H(+). Its pathway is secondary metabolite biosynthesis. Its function is as follows. Non-canonical nonribosomal peptide synthetase; part of the lnb gene cluster that mediates the biosynthesis of diastereomeric piperazines. Lna and lnb clusters encode sets of enzymes that produce overlapping sets of previously undescribed metabolites such as piperazinomycin-like metabolites or morpholine. The lna and lnb biosynthetic pathways appear to be part of a signaling network that controls the formation of sclerotia, a resilient overwintering structure. One primary function of the non-canonical nonribosomal peptide synthetases lnaA and lnbA consists in the reduction of L-tyrosine. The presence in the clusters of tailoring enzymes such as the oxidoreductases lnaB, lnbB, lnaE or lnbE, as well as of the cytochrome P450 monooxygenases lnaC, lnaD, or lnbC, might explain formation of various diastereomeric piperazines. This Aspergillus flavus (strain ATCC 200026 / FGSC A1120 / IAM 13836 / NRRL 3357 / JCM 12722 / SRRC 167) protein is Aldehyde reductase lnbA.